Consider the following 75-residue polypeptide: MAYRRRKKKVKKCRLCEMKLDYVDYKDTRLLSEFLTDKGKIIPKRLTGTCAKHQRMVKVAIKRARQMGLLPYLKI.

It belongs to the bacterial ribosomal protein bS18 family. As to quaternary structure, part of the 30S ribosomal subunit. Forms a tight heterodimer with protein bS6.

Binds as a heterodimer with protein bS6 to the central domain of the 16S rRNA, where it helps stabilize the platform of the 30S subunit. This is Small ribosomal subunit protein bS18 from Thermotoga sp. (strain RQ2).